A 148-amino-acid chain; its full sequence is UPF0208 membrane protein HD_1715 (148 aa).

The next 2 membrane-spanning stretches (helical) occupy residues 41–60 and 66–88; these read AARF…YFFT and ILAN…LYWL.

It belongs to the UPF0208 family.

Its subcellular location is the cell inner membrane. The chain is UPF0208 membrane protein HD_1715 from Haemophilus ducreyi (strain 35000HP / ATCC 700724).